We begin with the raw amino-acid sequence, 352 residues long: Ion-translocating oxidoreductase complex subunit D (352 aa).

The next 4 helical transmembrane spans lie at 20–40 (IMLL…WFFG), 42–62 (GTLV…ALVL), 89–109 (IPPL…VIIA), and 123–143 (PAMI…TSWL). T187 carries the FMN phosphoryl threonine modification. Transmembrane regions (helical) follow at residues 214-234 (ILAG…GVWL), 242-262 (WHIP…GWLF), 267-287 (LASP…FFIL), 301-321 (LIFG…GGYP), and 322-342 (DGVA…DYYT).

Belongs to the NqrB/RnfD family. As to quaternary structure, the complex is composed of six subunits: RsxA, RsxB, RsxC, RsxD, RsxE and RsxG. FMN serves as cofactor.

The protein localises to the cell inner membrane. Functionally, part of a membrane-bound complex that couples electron transfer with translocation of ions across the membrane. Required to maintain the reduced state of SoxR. This is Ion-translocating oxidoreductase complex subunit D from Escherichia coli O17:K52:H18 (strain UMN026 / ExPEC).